The sequence spans 216 residues: Probable GTP-binding protein EngB (216 aa).

In terms of domain architecture, EngB-type G spans A24–E205. Residues G32 to S39, G59 to A63, D86 to G89, T153 to D156, and F184 to A186 contribute to the GTP site. Mg(2+) contacts are provided by S39 and T61.

This sequence belongs to the TRAFAC class TrmE-Era-EngA-EngB-Septin-like GTPase superfamily. EngB GTPase family. Mg(2+) serves as cofactor.

In terms of biological role, necessary for normal cell division and for the maintenance of normal septation. This Anaeromyxobacter dehalogenans (strain 2CP-1 / ATCC BAA-258) protein is Probable GTP-binding protein EngB.